A 276-amino-acid chain; its full sequence is Glutathione S-transferase-like protein ustS (276 aa).

In terms of domain architecture, GST N-terminal spans 16 to 109 (STLPGTSKSW…HLDETYPDPP (94 aa)).

It belongs to the GST superfamily.

Its pathway is mycotoxin biosynthesis. Functionally, glutathione S-transferase-like protein; part of the gene cluster that mediates the biosynthesis of the secondary metabolite ustiloxin B, an antimitotic tetrapeptide. First, ustA is processed by the subtilisin-like endoprotease Kex2 that is outside the ustiloxin B gene cluster, at the C-terminal side of Arg-Lys, after transfer to Golgi apparatus through the endoplasmic reticulum (ER). Cleavage by KEX2 generates 16 peptides YAIG-I to YAIG-XVI. To process the precursor peptide further, at least two peptidases are necessary to cleave the N-terminal and C-terminal sides of the Tyr-Ala-Ile-Gly core peptide which serves as backbone for the synthesis of ustiloxin B, through cyclization and modification of the tyrosine with a non-protein coding amino acid, norvaline. One of the two peptidases must be the serine peptidase ustP; and the other pepdidase is probably ustH. Macrocyclization of the core peptide derived from ustA requires the tyrosinase ustQ, as well as the homologous oxidases ustYa and ustYb, and leads to the production of the first cyclization product N-desmethylustiloxin F. For the formation of N-desmethylustiloxin F, three oxidation steps are required, hydroxylation at the benzylic position, hydroxylation at either the aromatic ring of Tyr or beta-position of Ile, and oxidative cyclization. UstQ may catalyze the oxidation of a phenol moiety, whereas the ustYa and ustYb are most likely responsible for the remaining two-step oxidations. N-desmethylustiloxin F is then methylated by ustM to yield ustiloxin F which in turn substrate of the cytochrome P450 monooxygenase ustC which catalyzes the formation of S-deoxyustiloxin H. The flavoprotein monooxygenases ustF1 and ustF2 then participate in the modification of the side chain of S-deoxyustiloxin H, leading to the synthesis of an oxime intermediate, via ustiloxin H. Finally, carboxylative dehydration performed by the cysteine desulfurase-like protein ustD yields ustiloxin B. This chain is Glutathione S-transferase-like protein ustS, found in Aspergillus flavus (strain ATCC 200026 / FGSC A1120 / IAM 13836 / NRRL 3357 / JCM 12722 / SRRC 167).